Reading from the N-terminus, the 575-residue chain is MPVVRLSQAFVPTLKEAPADAQVASHKLLVRAGFIRQLGAGIYDYLPLAKRTLAKIEAIVREEMDAIGGQEFYLPALHPAEIWKESGRWEVMGDNMFRLKDRKNGDYCLGMTHEEIFTAIARDELRSYRQLPQVWYQIQTKFRDEPRPKSGLLRVRQFTMKDAYSFDVDRAGLDKSYEDQRRAYERIFTRCGLDFVAVQAHSGAMGGSESSEFMVRTDAGEDLVAACPRCRYAANTETATSRLASEQDGAGLPKPEKFATPGVVTIEALEQPPYGVAARRQLKTLVYVADEKLVVAVVRGDQELNEAKLQTATGAQVIRPAHPEEIPSLMGARAGSLGAVGFSRAKVFVDPSLADRKDMVTGANEDGFHLRGVEVRRDVLTGPHATVAELRTVRAGEGCPRCDGTLDVFKALEVGHIFKLGTKYSESMKATVLDADGKAVPIVMGSYGIGVERIMAAAIELHHDELGIRWPPAIAPFQATVLTLGPEPELKKAADELVKALSDAGLEVLHDDREERAGVKFKDADLVGIPLRISVGKKGLAEGKVEWKLRGDKAVELVPLAEVARRAAEHVRAGR.

Belongs to the class-II aminoacyl-tRNA synthetase family. ProS type 1 subfamily. In terms of assembly, homodimer.

Its subcellular location is the cytoplasm. The catalysed reaction is tRNA(Pro) + L-proline + ATP = L-prolyl-tRNA(Pro) + AMP + diphosphate. Catalyzes the attachment of proline to tRNA(Pro) in a two-step reaction: proline is first activated by ATP to form Pro-AMP and then transferred to the acceptor end of tRNA(Pro). As ProRS can inadvertently accommodate and process non-cognate amino acids such as alanine and cysteine, to avoid such errors it has two additional distinct editing activities against alanine. One activity is designated as 'pretransfer' editing and involves the tRNA(Pro)-independent hydrolysis of activated Ala-AMP. The other activity is designated 'posttransfer' editing and involves deacylation of mischarged Ala-tRNA(Pro). The misacylated Cys-tRNA(Pro) is not edited by ProRS. The polypeptide is Proline--tRNA ligase (Anaeromyxobacter sp. (strain Fw109-5)).